Consider the following 149-residue polypeptide: Transcriptional repressor NrdR (149 aa).

The segment at 3-34 (CPFCSHQETQVVETRVSEDGDFIRRRRQCGAC) is a zinc-finger region. The 91-residue stretch at 49–139 (PTVVKKDGRR…VYRSFEDIDE (91 aa)) folds into the ATP-cone domain.

It belongs to the NrdR family. Requires Zn(2+) as cofactor.

Negatively regulates transcription of bacterial ribonucleotide reductase nrd genes and operons by binding to NrdR-boxes. This is Transcriptional repressor NrdR from Acidovorax sp. (strain JS42).